The chain runs to 38 residues: Large ribosomal subunit protein bL36 (38 aa).

This sequence belongs to the bacterial ribosomal protein bL36 family.

This Prochlorococcus marinus (strain MIT 9312) protein is Large ribosomal subunit protein bL36.